The sequence spans 1030 residues: ADAMTS-like protein 4 (1030 aa).

A signal peptide spans 1–24 (MELWLGRLWLYVMLLLLLLQLCQD). The TSP type-1 1 domain occupies 47–91 (GPWGRWASCSQPCGVGVQRRSRTCELHPALSLPPRPPRHPEAPQP). 2 disordered regions span residues 73–150 (HPAL…KPGM) and 168–306 (LAHK…LPLT). Polar residues-rich tracts occupy residues 176-186 (KDSSTAEETLP), 211-237 (QSRSPSAETPRSGTAQTEVPSRTSSAP), and 245-257 (PTSSFRDSRSFQG). Asn-451 and Asn-731 each carry an N-linked (GlcNAc...) asparagine glycan. 5 consecutive TSP type-1 domains span residues 681 to 740 (CPPY…QLRL), 741 to 800 (CGHW…GPCT), 803 to 865 (WFYS…GPCE), 866 to 925 (KTWR…QGQA), and 926 to 982 (CEDQ…QPCN). The 38-residue stretch at 985–1022 (PDDQCKDSSPHCPLVVQARLCVYPYYTATCCRSCAHVL) folds into the PLAC domain.

In terms of assembly, interacts with CTSB. Interacts with FBN1. Post-translationally, glycosylated. Can be O-fucosylated by POFUT2 on a serine or a threonine residue found within the consensus sequence C1-X(2)-(S/T)-C2-G of the TSP type-1 repeat domains where C1 and C2 are the first and second cysteine residue of the repeat, respectively. Fucosylated repeats can then be further glycosylated by the addition of a beta-1,3-glucose residue by the glucosyltransferase, B3GALTL. Fucosylation mediates the efficient secretion of ADAMTS family members. Can also be C-glycosylated with one or two mannose molecules on tryptophan residues within the consensus sequence W-X-X-W of the TPRs, and N-glycosylated. These other glycosylations can also facilitate secretion.

The protein resides in the secreted. The protein localises to the extracellular space. Its subcellular location is the extracellular matrix. Its function is as follows. Positive regulation of apoptosis. May facilitate FBN1 microfibril biogenesis. This is ADAMTS-like protein 4 from Rattus norvegicus (Rat).